The following is a 220-amino-acid chain: MKTGIVSAVLALVMPVCVYATTLRLSTDIDLLVLDGKKVSSSLLRGADSIELDNGPHQIVFRIEKNIRLSNHEQRLYISPPLVVSFNTQKISQVNFNLPRLENEQESEAFEAAPRIELLDGDAMPIPVKLDILALTKTPKGTDYEADTERYNKAGKSASLPGFATMMADDSTLLSGVSELDVIPPQSQTLTEQRLKFWFQQADPETRTRFLQWAKQQPSS.

Residues 1 to 20 form the signal peptide; sequence MKTGIVSAVLALVMPVCVYA.

It belongs to the UPF0319 family.

The protein is UPF0319 protein Ent638_1476 of Enterobacter sp. (strain 638).